Reading from the N-terminus, the 239-residue chain is Transcriptional regulatory protein RstA (239 aa).

The Response regulatory domain occupies 3-116 (TIVFVEDDAE…VLLARLRLHL (114 aa)). A 4-aspartylphosphate modification is found at Asp-52. A DNA-binding region (ompR/PhoB-type) is located at residues 136–235 (YKALHFGTLT…VRNKGYLFAP (100 aa)).

In terms of processing, phosphorylated by RstB.

Its subcellular location is the cytoplasm. Member of the two-component regulatory system RstB/RstA. The sequence is that of Transcriptional regulatory protein RstA (rstA) from Escherichia coli (strain K12).